Consider the following 217-residue polypeptide: UDP-N-acetylglucosamine transferase subunit ALG14 (217 aa).

The Lumenal segment spans residues 1-3 (MLS). The chain crosses the membrane as a helical span at residues 4–26 (ILILAATAAGLVILLFQRLWTVL). Residues 27–217 (GPHHVTPRES…PKSVYLGRIV (191 aa)) are Cytoplasmic-facing.

The protein belongs to the ALG14 family. Forms with ALG13 the active heterodimeric UDP-N-acetylglucosamine transferase complex.

The protein resides in the endoplasmic reticulum membrane. Its function is as follows. Part of the UDP-N-acetylglucosamine transferase complex that operates in the biosynthetic pathway of dolichol-linked oligosaccharides, the glycan precursors employed in protein asparagine (N)-glycosylation. The assembly of dolichol-linked oligosaccharides begins on the cytosolic side of the endoplasmic reticulum membrane and finishes in its lumen. The sequential addition of sugars to dolichol pyrophosphate produces dolichol-linked oligosaccharides containing fourteen sugars, including two GlcNAcs, nine mannoses and three glucoses. Once assembled, the oligosaccharides are transferred from the lipid to nascent proteins by oligosaccharyltransferases. Functions as a protein-membrane adapter recruiting ALG13 at the cytoplasmic face of the endoplasmic reticulum, where the complex catalyzes the second step of dolichol pyrophosphate biosynthesis, transferring a beta1,4-linked N-acetylglucosamine (GlcNAc) from UDP-GlcNAc to GlcNAc-pyrophosphatedolichol (Gn-PDol) to produce N,N'-diacetylchitobiosyl diphosphodolichol. N,N'-diacetylchitobiosyl diphosphodolichol is a substrate for ALG1, the following enzyme in the biosynthetic pathway. This is UDP-N-acetylglucosamine transferase subunit ALG14 from Mus musculus (Mouse).